The primary structure comprises 221 residues: uncharacterized protein (221 aa).

A disordered region spans residues 1–30 (MVPPNPAHQPARRTQPQLQPQSQPRAQPLP). Over residues 12–25 (RRTQPQLQPQSQPR) the composition is skewed to polar residues. The chain crosses the membrane as a helical span at residues 37–57 (VLCIIVALVLLGLLVGLAILI).

It is found in the membrane. This is an uncharacterized protein from Arabidopsis thaliana (Mouse-ear cress).